The chain runs to 315 residues: Ribosomal RNA small subunit methyltransferase H (315 aa).

S-adenosyl-L-methionine is bound by residues 37–39 (AGH), Asp57, Tyr84, Asp105, and Gln112.

This sequence belongs to the methyltransferase superfamily. RsmH family.

It is found in the cytoplasm. The enzyme catalyses cytidine(1402) in 16S rRNA + S-adenosyl-L-methionine = N(4)-methylcytidine(1402) in 16S rRNA + S-adenosyl-L-homocysteine + H(+). Functionally, specifically methylates the N4 position of cytidine in position 1402 (C1402) of 16S rRNA. This chain is Ribosomal RNA small subunit methyltransferase H, found in Lachnospira eligens (strain ATCC 27750 / DSM 3376 / VPI C15-48 / C15-B4) (Eubacterium eligens).